The primary structure comprises 475 residues: UDP-N-acetylmuramate--L-alanine ligase (475 aa).

125–131 (GTHGKTS) lines the ATP pocket.

This sequence belongs to the MurCDEF family.

It localises to the cytoplasm. It catalyses the reaction UDP-N-acetyl-alpha-D-muramate + L-alanine + ATP = UDP-N-acetyl-alpha-D-muramoyl-L-alanine + ADP + phosphate + H(+). It functions in the pathway cell wall biogenesis; peptidoglycan biosynthesis. Functionally, cell wall formation. The protein is UDP-N-acetylmuramate--L-alanine ligase of Mycolicibacterium gilvum (strain PYR-GCK) (Mycobacterium gilvum (strain PYR-GCK)).